Reading from the N-terminus, the 124-residue chain is MIVGIGIDITEIDRIAKGWGRFGDRFARRILHPHEVVRMPAANPVAFLAGRFAVKEAAVKALGTGFSGGIGPRDIEVGVAPAGAPQLVLHGKAAARMEALGATRTHVSLTHGRDTAAAVVILES.

Positions 8 and 56 each coordinate Mg(2+).

Belongs to the P-Pant transferase superfamily. AcpS family. It depends on Mg(2+) as a cofactor.

It is found in the cytoplasm. It carries out the reaction apo-[ACP] + CoA = holo-[ACP] + adenosine 3',5'-bisphosphate + H(+). In terms of biological role, transfers the 4'-phosphopantetheine moiety from coenzyme A to a Ser of acyl-carrier-protein. The polypeptide is Holo-[acyl-carrier-protein] synthase (Nitratidesulfovibrio vulgaris (strain ATCC 29579 / DSM 644 / CCUG 34227 / NCIMB 8303 / VKM B-1760 / Hildenborough) (Desulfovibrio vulgaris)).